We begin with the raw amino-acid sequence, 123 residues long: Defensin beta 118 (123 aa).

Positions 1 to 19 (MKLLLLALPVLVLLPQVIP) are cleaved as a signal peptide. 3 disulfide bridges follow: Cys27/Cys54, Cys34/Cys48, and Cys38/Cys55. Residues 65-123 (VPMTSPTPLSDSTPGIIDDILTVRFTTDYFEVSSKKDMVEESEAGRGTETSLPNVHHSS) constitute a propeptide that is removed on maturation. Basic and acidic residues predominate over residues 100–110 (KDMVEESEAGR). The interval 100–123 (KDMVEESEAGRGTETSLPNVHHSS) is disordered. Polar residues predominate over residues 112 to 123 (TETSLPNVHHSS).

This sequence belongs to the beta-defensin family. In terms of processing, the three-dimensional structure formed by the three intramolecular disulfide bridges is indispensable for antimicrobial activity.

Its subcellular location is the secreted. In terms of biological role, host defense peptide that exhibits antimicrobial activity against both Gram-negative bacteria, such as E.coli and S.typhimurium, and Gram-positive bacteria, such as S.aureus and B.subtilis. Inhibits cell adhesion of E.coli on intestinal epithelial enterocytes. Causes rapid permeabilization of both the outer and inner membrane of E.coli, leading to morphological alterations on the bacterial surface. Binds to bacterial lipopolysaccharides (LPS) with high affinity, and may thereby be involved in immunoregulation through LPS neutralization. May contribute to epididymal innate immunity and protect the sperm against attack by microorganisms. The protein is Defensin beta 118 (DEFB118) of Pan troglodytes (Chimpanzee).